The primary structure comprises 164 residues: Large ribosomal subunit protein uL15 (164 aa).

Positions 1-33 (MTSKKRRQRGSRTHGGGTHKNRRGAGHRGGRGR) are enriched in basic residues. Disordered stretches follow at residues 1–59 (MTSK…PGAE) and 137–164 (AGGSATLTEQGKSIAVGEDEEPNSNDEN). The segment covering 34–43 (AGRDKHEQHN) has biased composition (basic and acidic residues). Positions 153 to 164 (GEDEEPNSNDEN) are enriched in acidic residues.

It belongs to the universal ribosomal protein uL15 family. As to quaternary structure, part of the 50S ribosomal subunit.

Binds to the 23S rRNA. In Haloquadratum walsbyi (strain DSM 16790 / HBSQ001), this protein is Large ribosomal subunit protein uL15.